Reading from the N-terminus, the 557-residue chain is MKCQTCHLPLQLDPSLEGLSLTQRNLLLSNNSIITATNENVISNKGIEAADNCGPQIPKERLRRLGEIQNIKDLNLKDDKLITDSFVFLNHDDDDNANITSNSREDQRYGNANGNDNKKANSDTSDGTSTFRDHDEEEQEATDEDENQQIQLNSKTLSTQVNAMTNVFNILSSQTNIDFPICQDCCNILINRLKSEYDDAIKERDTYAQFLSKLESQNKEISESNKEKQYSHNLSEKENLKKEEERLLDQLLRLEMTDDDLDGELVRLQEKKVQLENEKLQKLSDQNLMDLNNIQFNKNLQSLKLQYELSLNQLDKLRKINIFNATFKISHSGPFATINGLRLGSIPESVVPWKEINAALGQLILLLATINKNLKINLVDYELQPMGSFSKIKKRMVNSVEYNNSTTNAPGDWLILPVYYDENFNLGRIFRKETKFDKSLETTLEIISEITRQLSTIASSYSSQTLTTSQDESSMNNANDVENSTSILELPYIMNKDKINGLSVKLHGSSPNLEWTTAMKFLLTNVKWLLAFSSNLLSKSITLSPTVNYNDKTISGN.

Disordered regions lie at residues 93 to 149 and 218 to 238; these read DDDN…ENQQ and NKEISESNKEKQYSHNLSEKE. Residues 135-147 show a composition bias toward acidic residues; sequence DEEEQEATDEDEN. A Phosphothreonine modification is found at Thr142. The stretch at 189–322 forms a coiled coil; that stretch reads LINRLKSEYD…QLDKLRKINI (134 aa). The BARA stretch occupies residues 320-539; that stretch reads INIFNATFKI…LAFSSNLLSK (220 aa). A required for membrane-association, autophagic function during starvation and normal autophagosome morphology region spans residues 515–540; sequence WTTAMKFLLTNVKWLLAFSSNLLSKS.

Belongs to the beclin family. As to quaternary structure, component of the autophagy-specific VPS34 PI3-kinase complex I composed of VPS15, VPS30, VPS34, ATG14 and ATG38; and of the VPS34 PI3-kinase complex II composed of VPS15, VPS30, VPS34 and VPS38.

The protein resides in the endosome membrane. It is found in the vacuole membrane. Its subcellular location is the preautophagosomal structure membrane. Functionally, required for cytoplasm to vacuole transport (Cvt), autophagy, nucleophagy, and mitophagy, as a part of the autophagy-specific VPS34 PI3-kinase complex I. This complex is essential to recruit the ATG8-phosphatidylinositol conjugate and the ATG12-ATG5 conjugate to the pre-autophagosomal structure. Also involved in endosome-to-Golgi retrograde transport as part of the VPS34 PI3-kinase complex II. This second complex is required for the endosome-to-Golgi retrieval of PEP1 and KEX2, and the recruitment of VPS5 and VPS7, two components of the retromer complex, to endosomal membranes (probably through the synthesis of a specific pool of phosphatidylinositol 3-phosphate recruiting the retromer to the endosomes). Also plays a role in regulation of filamentous growth. This chain is Vacuolar protein sorting-associated protein 30, found in Saccharomyces cerevisiae (strain ATCC 204508 / S288c) (Baker's yeast).